The following is a 360-amino-acid chain: Chorismate synthase (360 aa).

Arg48 contributes to the NADP(+) binding site. FMN is bound by residues 125–127 (RSS), 242–243 (NA), Gly286, 301–305 (KPTSS), and Arg327.

This sequence belongs to the chorismate synthase family. In terms of assembly, homotetramer. FMNH2 serves as cofactor.

It catalyses the reaction 5-O-(1-carboxyvinyl)-3-phosphoshikimate = chorismate + phosphate. Its pathway is metabolic intermediate biosynthesis; chorismate biosynthesis; chorismate from D-erythrose 4-phosphate and phosphoenolpyruvate: step 7/7. Catalyzes the anti-1,4-elimination of the C-3 phosphate and the C-6 proR hydrogen from 5-enolpyruvylshikimate-3-phosphate (EPSP) to yield chorismate, which is the branch point compound that serves as the starting substrate for the three terminal pathways of aromatic amino acid biosynthesis. This reaction introduces a second double bond into the aromatic ring system. This chain is Chorismate synthase, found in Pelagibacter ubique (strain HTCC1062).